A 349-amino-acid polypeptide reads, in one-letter code: Meiotic recombination protein DMC1 homolog (349 aa).

An ATP-binding site is contributed by 138–145; sequence GEFRSGKT. R240 serves as a coordination point for dsDNA. R240, F243, R246, R252, and R320 together coordinate ssDNA. DsDNA contacts are provided by R246 and R252.

The protein belongs to the RecA family. DMC1 subfamily. As to quaternary structure, double stacked ring-shaped homooctamer.

It localises to the nucleus. Its function is as follows. May participate in meiotic recombination. This is Meiotic recombination protein DMC1 homolog (LIM15) from Lilium longiflorum (Trumpet lily).